Reading from the N-terminus, the 93-residue chain is DNA/RNA-binding protein Alba (93 aa).

Position 11 is an N6-acetyllysine (Lys-11).

This sequence belongs to the histone-like Alba family. In terms of processing, acetylated. Acetylation at Lys-11 decreases DNA-binding affinity.

Its subcellular location is the cytoplasm. It localises to the chromosome. Its function is as follows. Binds double-stranded DNA tightly but without sequence specificity. Involved in DNA compaction. The chain is DNA/RNA-binding protein Alba from Pyrococcus furiosus (strain ATCC 43587 / DSM 3638 / JCM 8422 / Vc1).